The chain runs to 316 residues: Porphobilinogen deaminase (316 aa).

Position 245 is an S-(dipyrrolylmethanemethyl)cysteine (C245).

Belongs to the HMBS family. In terms of assembly, monomer. Dipyrromethane serves as cofactor.

The catalysed reaction is 4 porphobilinogen + H2O = hydroxymethylbilane + 4 NH4(+). Its pathway is porphyrin-containing compound metabolism; protoporphyrin-IX biosynthesis; coproporphyrinogen-III from 5-aminolevulinate: step 2/4. It functions in the pathway porphyrin-containing compound metabolism; chlorophyll biosynthesis. In terms of biological role, tetrapolymerization of the monopyrrole PBG into the hydroxymethylbilane pre-uroporphyrinogen in several discrete steps. The chain is Porphobilinogen deaminase from Prochlorococcus marinus subsp. pastoris (strain CCMP1986 / NIES-2087 / MED4).